The following is a 569-amino-acid chain: Proline--tRNA ligase (569 aa).

Belongs to the class-II aminoacyl-tRNA synthetase family. ProS type 1 subfamily. Homodimer.

It localises to the cytoplasm. The catalysed reaction is tRNA(Pro) + L-proline + ATP = L-prolyl-tRNA(Pro) + AMP + diphosphate. In terms of biological role, catalyzes the attachment of proline to tRNA(Pro) in a two-step reaction: proline is first activated by ATP to form Pro-AMP and then transferred to the acceptor end of tRNA(Pro). As ProRS can inadvertently accommodate and process non-cognate amino acids such as alanine and cysteine, to avoid such errors it has two additional distinct editing activities against alanine. One activity is designated as 'pretransfer' editing and involves the tRNA(Pro)-independent hydrolysis of activated Ala-AMP. The other activity is designated 'posttransfer' editing and involves deacylation of mischarged Ala-tRNA(Pro). The misacylated Cys-tRNA(Pro) is not edited by ProRS. This chain is Proline--tRNA ligase, found in Legionella pneumophila subsp. pneumophila (strain Philadelphia 1 / ATCC 33152 / DSM 7513).